Consider the following 696-residue polypeptide: DNA ligase (696 aa).

Residues 36 to 40 (DAVYD), 85 to 86 (SL), and Glu124 each bind NAD(+). Catalysis depends on Lys126, which acts as the N6-AMP-lysine intermediate. 4 residues coordinate NAD(+): Arg147, Glu184, Lys308, and Lys332. Zn(2+)-binding residues include Cys426, Cys429, Cys444, and Cys449. The BRCT domain occupies 618–696 (QRTVSLQGQT…EEELLKLLAS (79 aa)).

The protein belongs to the NAD-dependent DNA ligase family. LigA subfamily. Mg(2+) is required as a cofactor. The cofactor is Mn(2+).

It catalyses the reaction NAD(+) + (deoxyribonucleotide)n-3'-hydroxyl + 5'-phospho-(deoxyribonucleotide)m = (deoxyribonucleotide)n+m + AMP + beta-nicotinamide D-nucleotide.. Its function is as follows. DNA ligase that catalyzes the formation of phosphodiester linkages between 5'-phosphoryl and 3'-hydroxyl groups in double-stranded DNA using NAD as a coenzyme and as the energy source for the reaction. It is essential for DNA replication and repair of damaged DNA. The protein is DNA ligase of Prochlorococcus marinus (strain MIT 9303).